Here is a 224-residue protein sequence, read N- to C-terminus: Probable C-&gt;U-editing enzyme APOBEC-2 (224 aa).

Residues 1–25 are disordered; the sequence is MAQKEEAAAATEAASQNGEDLENLD. Zn(2+) is bound by residues E60 and H98. In terms of domain architecture, CMP/dCMP-type deaminase spans 64 to 169; the sequence is GRNKTFLCYV…LEIQDALKKL (106 aa). E100 serves as the catalytic Proton donor. The Zn(2+) site is built by C128 and C131.

Belongs to the cytidine and deoxycytidylate deaminase family. Homotetramer. The cofactor is Zn(2+).

It carries out the reaction cytidine(6666) in apoB mRNA + H2O + H(+) = uridine(6666) in apoB mRNA + NH4(+). Functionally, probable C to U editing enzyme whose physiological substrate is not yet known. Does not display detectable apoB mRNA editing. Has a low intrinsic cytidine deaminase activity. May play a role in the epigenetic regulation of gene expression through the process of active DNA demethylation. The protein is Probable C-&gt;U-editing enzyme APOBEC-2 (APOBEC2) of Pongo pygmaeus (Bornean orangutan).